The primary structure comprises 256 residues: Glutamate racemase (256 aa).

Residues 12–13 (DS) and 44–45 (YG) each bind substrate. The active-site Proton donor/acceptor is the Cys-75. Position 76–77 (76–77 (NT)) interacts with substrate. Cys-186 (proton donor/acceptor) is an active-site residue. 187–188 (TH) contacts substrate.

Belongs to the aspartate/glutamate racemases family.

The enzyme catalyses L-glutamate = D-glutamate. It participates in cell wall biogenesis; peptidoglycan biosynthesis. Functionally, provides the (R)-glutamate required for cell wall biosynthesis. In Clostridium acetobutylicum (strain ATCC 824 / DSM 792 / JCM 1419 / IAM 19013 / LMG 5710 / NBRC 13948 / NRRL B-527 / VKM B-1787 / 2291 / W), this protein is Glutamate racemase.